A 251-amino-acid chain; its full sequence is Chlorophyll a-b binding protein 4, chloroplastic (251 aa).

Residue S35 is modified to Phosphoserine. Chlorophyll b is bound at residue W57. Positions 77 and 96 each coordinate chlorophyll a. Chlorophyll b is bound at residue R101. Transmembrane regions (helical) follow at residues 102 to 122 (WAMLGVAGMLLPEVFTKIGII) and 135 to 155 (YFASSSTLFVIEFILFHYVEI). Chlorophyll b is bound by residues S138, V144, E154, and R157. K204, E205, N208, R210, Q222, and H237 together coordinate chlorophyll a.

The protein belongs to the light-harvesting chlorophyll a/b-binding (LHC) protein family. In terms of assembly, the LHC complex consists of chlorophyll a-b binding proteins. Red-emitting heterodimer with LHCA1. The cofactor is Binds at least 14 chlorophylls (8 Chl-a and 6 Chl-b) and carotenoids such as lutein and neoxanthin.. Photoregulated by reversible phosphorylation of its threonine residues.

It is found in the plastid. The protein resides in the chloroplast thylakoid membrane. The light-harvesting complex (LHC) functions as a light receptor, it captures and delivers excitation energy to photosystems with which it is closely associated. In Arabidopsis thaliana (Mouse-ear cress), this protein is Chlorophyll a-b binding protein 4, chloroplastic.